The chain runs to 376 residues: Nucleoside diphosphate kinase homolog 7 (376 aa).

Residues 3–91 (HSERFVFIAE…YTARQLGSRK (89 aa)) form the DM10 domain.

The protein belongs to the NDK family. Component of sperm flagellar doublet microtubules. Component of the gamma-tubulin ring complex. Undergoes autophosphorylation. Expressed in airway epithelial cells.

It is found in the cytoplasm. The protein resides in the cytoskeleton. It localises to the microtubule organizing center. Its subcellular location is the centrosome. The protein localises to the nucleus. It is found in the spindle. The protein resides in the cilium axoneme. It localises to the flagellum axoneme. Its subcellular location is the cell projection. The protein localises to the cilium. In terms of biological role, possesses an intrinsic kinase activity. Displays 3'-5' exonuclease activity with a preference for single-stranded DNA. Does not seem to have nucleoside diphosphate kinase activity. Functional component of the gamma-tubulin ring complex, implicated in the regulation of the microtubule-nucleating activity of the gamma-tubulin ring complex in centrosomes, in a kinase activity-dependent manner. Part of the dynein-decorated doublet microtubules (DMTs) in cilia axoneme, which is required for motile cilia beating. This Homo sapiens (Human) protein is Nucleoside diphosphate kinase homolog 7.